A 332-amino-acid chain; its full sequence is UPF0194 membrane protein YbhG (332 aa).

The first 16 residues, Met-1–Ala-16, serve as a signal peptide directing secretion. The stretch at Glu-108–Ala-209 forms a coiled coil.

This sequence belongs to the UPF0194 family.

The protein localises to the periplasm. This Shigella dysenteriae serotype 1 (strain Sd197) protein is UPF0194 membrane protein YbhG.